We begin with the raw amino-acid sequence, 360 residues long: tRNA pseudouridine synthase D (360 aa).

Asp76 (nucleophile) is an active-site residue. One can recognise a TRUD domain in the interval 151-332; sequence GMPNFFGYQR…HGIYKEKNAW (182 aa).

The protein belongs to the pseudouridine synthase TruD family.

It catalyses the reaction uridine(13) in tRNA = pseudouridine(13) in tRNA. In terms of biological role, responsible for synthesis of pseudouridine from uracil-13 in transfer RNAs. This is tRNA pseudouridine synthase D from Nitratiruptor sp. (strain SB155-2).